The primary structure comprises 447 residues: DNA primase DnaG (447 aa).

The Toprim domain maps to 200–274; the sequence is DSIIVVEGRA…DIDYVARAPE (75 aa). The Mg(2+) site is built by Glu206, Asp248, and Asp250.

It belongs to the archaeal DnaG primase family. In terms of assembly, forms a ternary complex with MCM helicase and DNA. Component of the archaeal exosome complex. Requires Mg(2+) as cofactor.

The enzyme catalyses ssDNA + n NTP = ssDNA/pppN(pN)n-1 hybrid + (n-1) diphosphate.. In terms of biological role, RNA polymerase that catalyzes the synthesis of short RNA molecules used as primers for DNA polymerase during DNA replication. Also part of the exosome, which is a complex involved in RNA degradation. Acts as a poly(A)-binding protein that enhances the interaction between heteromeric, adenine-rich transcripts and the exosome. This Pyrococcus horikoshii (strain ATCC 700860 / DSM 12428 / JCM 9974 / NBRC 100139 / OT-3) protein is DNA primase DnaG.